A 306-amino-acid polypeptide reads, in one-letter code: Aspartate carbamoyltransferase catalytic subunit (306 aa).

Carbamoyl phosphate is bound by residues Arg-54 and Thr-55. Lys-83 serves as a coordination point for L-aspartate. Residues Arg-104, His-132, and Gln-135 each coordinate carbamoyl phosphate. Residues Arg-165 and Arg-227 each contribute to the L-aspartate site. Leu-266 and Pro-267 together coordinate carbamoyl phosphate.

This sequence belongs to the aspartate/ornithine carbamoyltransferase superfamily. ATCase family. As to quaternary structure, heterododecamer (2C3:3R2) of six catalytic PyrB chains organized as two trimers (C3), and six regulatory PyrI chains organized as three dimers (R2).

The catalysed reaction is carbamoyl phosphate + L-aspartate = N-carbamoyl-L-aspartate + phosphate + H(+). It participates in pyrimidine metabolism; UMP biosynthesis via de novo pathway; (S)-dihydroorotate from bicarbonate: step 2/3. In terms of biological role, catalyzes the condensation of carbamoyl phosphate and aspartate to form carbamoyl aspartate and inorganic phosphate, the committed step in the de novo pyrimidine nucleotide biosynthesis pathway. The chain is Aspartate carbamoyltransferase catalytic subunit from Finegoldia magna (strain ATCC 29328 / DSM 20472 / WAL 2508) (Peptostreptococcus magnus).